Here is a 304-residue protein sequence, read N- to C-terminus: tRNA pseudouridine synthase B (304 aa).

Residue aspartate 41 is the Nucleophile of the active site.

It belongs to the pseudouridine synthase TruB family. Type 1 subfamily.

It catalyses the reaction uridine(55) in tRNA = pseudouridine(55) in tRNA. Its function is as follows. Responsible for synthesis of pseudouridine from uracil-55 in the psi GC loop of transfer RNAs. This chain is tRNA pseudouridine synthase B, found in Nitratidesulfovibrio vulgaris (strain ATCC 29579 / DSM 644 / CCUG 34227 / NCIMB 8303 / VKM B-1760 / Hildenborough) (Desulfovibrio vulgaris).